The primary structure comprises 606 residues: Ubiquitin carboxyl-terminal hydrolase 2 (606 aa).

A necessary for interaction with MDM4 region spans residues 1–201; that stretch reads MSQLSSTLKR…RSEYLADYLE (201 aa). 2 disordered regions span residues 53-112 and 207-228; these read PSPP…GGSG and ASAP…LSPT. Basic and acidic residues predominate over residues 90-100; it reads KRAESQTRGTE. Residues 268–600 form the USP domain; sequence AGLRNLGNTC…DAYLLFYELA (333 aa). Catalysis depends on Cys-277, which acts as the Nucleophile. The segment at 404 to 504 is necessary for interaction with MDM4; sequence YLEREDSRIG…FPKILVLHLK (101 aa). Residues Cys-426, Cys-429, Cys-477, and Cys-480 each contribute to the Zn(2+) site. The active-site Proton acceptor is the His-558.

The protein belongs to the peptidase C19 family. USP2 subfamily. As to quaternary structure, homooligomer. Found in trimeric complex with MDM2 and MDM4 and USP2. Interacts with CCND1; the interaction is direct and promotes its stabilization by antagonizing ubiquitin-dependent degradation. Interacts (via N-terminus and C-terminus) with MDM2. Interacts with MDM4 and PER1. Interacts with KCNQ1; counteracts the NEDD4L-specific down-regulation of I(Ks) and restores plasma membrane localization of KCNQ1.

It localises to the cytoplasm. The protein resides in the perinuclear region. It carries out the reaction Thiol-dependent hydrolysis of ester, thioester, amide, peptide and isopeptide bonds formed by the C-terminal Gly of ubiquitin (a 76-residue protein attached to proteins as an intracellular targeting signal).. Its activity is regulated as follows. Cleavage is inhibited by ubiquitin in a dosage-dependent manner. Cleavage is blocked by ubiquitin aldehyde. Its function is as follows. Hydrolase that deubiquitinates polyubiquitinated target proteins such as MDM2, MDM4 and CCND1. Possesses both ubiquitin-specific peptidase and isopeptidase activities. Deubiquitinates MDM2 without reversing MDM2-mediated p53/TP53 ubiquitination and thus indirectly promotes p53/TP53 degradation and limits p53 activity. Has no deubiquitinase activity against p53/TP53. Prevents MDM2-mediated degradation of MDM4. Plays a role in the G1/S cell-cycle progression in normal and cancer cells. Plays a role in the regulation of myogenic differentiation of embryonic muscle cells. Regulates the circadian clock by modulating its intrinsic circadian rhythm and its capacity to respond to external cues. Associates with clock proteins and deubiquitinates core clock component PER1 but does not affect its overall stability. Regulates the nucleocytoplasmic shuttling and nuclear retention of PER1 and its repressive role on the clock transcription factors CLOCK and BMAL1. This Bos taurus (Bovine) protein is Ubiquitin carboxyl-terminal hydrolase 2 (USP2).